Here is a 352-residue protein sequence, read N- to C-terminus: MWKGLIHQYKEFLPVTDQTPALTLHEGNTPLIHLPKLSEQLGIELHVKTEGVNPTGSFKDRGMVMAVAKAKEEGNDTIMCASTGNTSAAAAAYAARANMKCIVIIPNGKIAFGKLAQAVMYGAEIIAIDGNFDDALKIVRSICEKSPIALVNSVNPYRIEGQKTAAFEVCEQLGEAPDVLAIPVGNAGNITAYWKGFKEYHEKNGTGLPKMRGFEAEGAAAIVRNEVIENPETIATAIRIGNPASWDKAVKAAEESNGKIDEVTDDEILHAYQLIARVEGVFAEPGSCASIAGVLKQVKSGEIPKGSKVVAVLTGNGLKDPNTAVDISEIKPVTLPTDEDSILEYVKGAARV.

K59 is subject to N6-(pyridoxal phosphate)lysine. Pyridoxal 5'-phosphate-binding positions include N85, 185-189, and T314; that span reads GNAGN.

It belongs to the threonine synthase family. It depends on pyridoxal 5'-phosphate as a cofactor.

It catalyses the reaction O-phospho-L-homoserine + H2O = L-threonine + phosphate. It functions in the pathway amino-acid biosynthesis; L-threonine biosynthesis; L-threonine from L-aspartate: step 5/5. Its function is as follows. Catalyzes the gamma-elimination of phosphate from L-phosphohomoserine and the beta-addition of water to produce L-threonine. The sequence is that of Threonine synthase (thrC) from Bacillus subtilis (strain 168).